We begin with the raw amino-acid sequence, 339 residues long: tRNA-dihydrouridine(20/20a) synthase (339 aa).

FMN is bound by residues 26-28 (PML) and Gln78. Cys108 functions as the Proton donor in the catalytic mechanism. Residues Lys147, His180, 220 to 222 (NGG), and 242 to 243 (GR) contribute to the FMN site.

Belongs to the Dus family. DusA subfamily. The cofactor is FMN.

It catalyses the reaction 5,6-dihydrouridine(20) in tRNA + NADP(+) = uridine(20) in tRNA + NADPH + H(+). The enzyme catalyses 5,6-dihydrouridine(20) in tRNA + NAD(+) = uridine(20) in tRNA + NADH + H(+). The catalysed reaction is 5,6-dihydrouridine(20a) in tRNA + NADP(+) = uridine(20a) in tRNA + NADPH + H(+). It carries out the reaction 5,6-dihydrouridine(20a) in tRNA + NAD(+) = uridine(20a) in tRNA + NADH + H(+). Functionally, catalyzes the synthesis of 5,6-dihydrouridine (D), a modified base found in the D-loop of most tRNAs, via the reduction of the C5-C6 double bond in target uridines. Specifically modifies U20 and U20a in tRNAs. This Shigella flexneri protein is tRNA-dihydrouridine(20/20a) synthase.